The sequence spans 767 residues: V-set and immunoglobulin domain-containing protein 10-like 2 (767 aa).

The N-terminal stretch at 1 to 28 is a signal peptide; sequence MVGQRAQHSPVSLLLLIHLCLLHLRASG. Ig-like domains follow at residues 34-140, 150-234, and 242-324; these read PEAP…SHLT, PQVR…AFLD, and PVIT…TTVQ. 3 disulfide bridges follow: cysteine 56-cysteine 122, cysteine 169-cysteine 217, and cysteine 268-cysteine 308. An N-linked (GlcNAc...) asparagine glycan is attached at asparagine 376. Ig-like domains are found at residues 399-499 and 501-593; these read PALA…LQLE and PQLD…VLLE. Cystine bridges form between cysteine 435/cysteine 481 and cysteine 522/cysteine 577. The Fibronectin type-III domain occupies 599–699; that stretch reads APPNVTISRL…EVKIPADPPF (101 aa). N-linked (GlcNAc...) asparagine glycans are attached at residues asparagine 602 and asparagine 628. The helical transmembrane segment at 704 to 724 threads the bilayer; sequence AVLGAAGTGMVVATVASLLVF. A disordered region spans residues 735–754; it reads PRLETPTTTPGLDPAQETTD. Residues 739–754 show a composition bias toward polar residues; that stretch reads TPTTTPGLDPAQETTD.

Its subcellular location is the membrane. This chain is V-set and immunoglobulin domain-containing protein 10-like 2, found in Homo sapiens (Human).